Consider the following 548-residue polypeptide: Chaperonin GroEL (548 aa).

ATP contacts are provided by residues Thr30–Pro33, Lys51, Asp87–Thr91, Gly415, Asn478–Ala480, and Asp494.

The protein belongs to the chaperonin (HSP60) family. Forms a cylinder of 14 subunits composed of two heptameric rings stacked back-to-back. Interacts with the co-chaperonin GroES.

The protein resides in the cytoplasm. It carries out the reaction ATP + H2O + a folded polypeptide = ADP + phosphate + an unfolded polypeptide.. Functionally, together with its co-chaperonin GroES, plays an essential role in assisting protein folding. The GroEL-GroES system forms a nano-cage that allows encapsulation of the non-native substrate proteins and provides a physical environment optimized to promote and accelerate protein folding. The sequence is that of Chaperonin GroEL from Janthinobacterium sp. (strain Marseille) (Minibacterium massiliensis).